The sequence spans 177 residues: Nucleoside triphosphate/diphosphate phosphatase (177 aa).

Residue R23 is the Proton donor of the active site. Mg(2+) contacts are provided by N87, D103, D105, D107, D120, and E123.

It belongs to the Ntdp family. Mg(2+) is required as a cofactor.

The catalysed reaction is a ribonucleoside 5'-triphosphate + H2O = a ribonucleoside 5'-diphosphate + phosphate + H(+). The enzyme catalyses a ribonucleoside 5'-diphosphate + H2O = a ribonucleoside 5'-phosphate + phosphate + H(+). Its function is as follows. Has nucleoside phosphatase activity towards nucleoside triphosphates and nucleoside diphosphates. This Streptococcus pneumoniae (strain ATCC 700669 / Spain 23F-1) protein is Nucleoside triphosphate/diphosphate phosphatase.